The chain runs to 160 residues: Archaemetzincin (160 aa).

Position 117 (His-117) interacts with Zn(2+). The active-site Proton acceptor is Glu-118. Zn(2+) is bound by residues His-121, His-127, Cys-128, Cys-132, Cys-151, and Cys-154.

The protein belongs to the peptidase M54 family. As to quaternary structure, monomer. The cofactor is Zn(2+).

Its function is as follows. Probable zinc metalloprotease whose natural substrate is unknown. The protein is Archaemetzincin of Archaeoglobus fulgidus (strain ATCC 49558 / DSM 4304 / JCM 9628 / NBRC 100126 / VC-16).